The following is an 866-amino-acid chain: Replication factor C small subunit (866 aa).

A DOD-type homing endonuclease domain is found at 183–313; that stretch reads WLGYFIGDGH…VTYALAGFGI (131 aa).

Belongs to the activator 1 small subunits family. RfcS subfamily. In terms of assembly, heteromultimer composed of small subunits (RfcS) and large subunits (RfcL). Post-translationally, this protein undergoes a protein self splicing that involves a post-translational excision of the intervening region (intein) followed by peptide ligation.

Functionally, part of the RFC clamp loader complex which loads the PCNA sliding clamp onto DNA. The polypeptide is Replication factor C small subunit (rfcS) (Thermococcus kodakarensis (strain ATCC BAA-918 / JCM 12380 / KOD1) (Pyrococcus kodakaraensis (strain KOD1))).